The following is a 283-amino-acid chain: 2-hydroxy-6-oxononadienedioate/2-hydroxy-6-oxononatrienedioate hydrolase (283 aa).

One can recognise an AB hydrolase-1 domain in the interval 35–269 (VVVMFHGSGP…KCGHWAQWEH (235 aa)). Catalysis depends on histidine 263, which acts as the Proton acceptor.

Belongs to the AB hydrolase superfamily. MhpC family. As to quaternary structure, homodimer.

It catalyses the reaction (2Z,4E)-2-hydroxy-6-oxonona-2,4-dienedioate + H2O = (2Z)-2-hydroxypenta-2,4-dienoate + succinate + H(+). It carries out the reaction (2Z,4E,7E)-2-hydroxy-6-oxonona-2,4,7-trienedioate + H2O = (2Z)-2-hydroxypenta-2,4-dienoate + fumarate + H(+). It participates in aromatic compound metabolism; 3-phenylpropanoate degradation. Functionally, catalyzes the cleavage of the C5-C6 bond of 2-hydroxy-6-oxononadienedioate and 2-hydroxy-6-oxononatrienedioate, a dienol ring fission product of the bacterial meta-cleavage pathway for degradation of phenylpropionic acid. This chain is 2-hydroxy-6-oxononadienedioate/2-hydroxy-6-oxononatrienedioate hydrolase, found in Pseudomonas sp.